The chain runs to 1230 residues: Cullin-associated NEDD8-dissociated protein 1 (1230 aa).

Position 2 is an N-acetylalanine (alanine 2). HEAT repeat units follow at residues 2 to 39 (ASAS…KDSI), 44 to 81 (DSER…KVKE), 83 to 119 (QVET…ELPP), 131 to 165 (CKKI…LSRQ), 171 to 208 (NFHP…SCGN), 210 to 247 (VFVG…QAGH), 248 to 282 (RIGE…FESF), 289 to 366 (EVYP…TRHE), 370 to 407 (EFYK…QTRP), 424 to 467 (PLTM…VLPG), 471 to 510 (QHIP…NHSP), and 515 to 552 (PHVQ…VIRP). Residue lysine 55 is modified to N6-acetyllysine. Residues 315–343 (DEDEDENAMDADGGDDDDQGSDDEYSDDG) form a disordered region. At serine 335 the chain carries Phosphoserine. Serine 558 bears the Phosphoserine mark. 15 HEAT repeats span residues 563-602 (PYIK…NLGD), 606-643 (SDLP…LKID), 646-683 (PVLG…NYSD), 688-725 (AMID…VYPS), 729-768 (KISG…TGTN), 770-808 (LGYM…ALTR), 809-845 (ACPK…LGEV), 852-889 (SGQL…GNLP), 890-927 (EYLP…GLKP), 928-960 (YVEN…KLTL), 961-998 (IDPE…DHPQ), 1002-1039 (PLLK…NKPS), 1043-1097 (DLLD…DSCL), 1099-1133 (RLDI…LSTL), and 1140-1189 (QRLD…IPEA). At lysine 971 the chain carries N6-acetyllysine.

It belongs to the CAND family. In terms of assembly, interacts with TBP. Part of a complex that contains CUL1 and RBX1. Interacts with unneddylated cullins: interacts with CUL1, CUL2, CUL3, CUL4A, CUL4B and CUL5. Does not bind neddylated CUL1. Interaction with cullins is abolished in presence of COMMD1, which antagonizes with CAND1 for interacting with cullins. Interacts with ERCC6. Interacts with DCUN1D1, DCUN1D2, DCUN1D3, DCUN1D4 and DCUN1D5; these interactions are bridged by cullins and strongly inhibits the neddylation of cullins.

The protein localises to the cytoplasm. Its subcellular location is the nucleus. In terms of biological role, key assembly factor of SCF (SKP1-CUL1-F-box protein) E3 ubiquitin ligase complexes that promotes the exchange of the substrate-recognition F-box subunit in SCF complexes, thereby playing a key role in the cellular repertoire of SCF complexes. Acts as a F-box protein exchange factor. The exchange activity of CAND1 is coupled with cycles of neddylation conjugation: in the deneddylated state, cullin-binding CAND1 binds CUL1-RBX1, increasing dissociation of the SCF complex and promoting exchange of the F-box protein. Probably plays a similar role in other cullin-RING E3 ubiquitin ligase complexes. This is Cullin-associated NEDD8-dissociated protein 1 (CAND1) from Pongo abelii (Sumatran orangutan).